The following is a 581-amino-acid chain: Aspartate--tRNA ligase (581 aa).

Position 170 (glutamate 170) interacts with L-aspartate. The tract at residues 194–197 is aspartate; that stretch reads QLFK. Arginine 216 contributes to the L-aspartate binding site. Residues 216–218 and glutamine 225 each bind ATP; that span reads RDE. Histidine 439 provides a ligand contact to L-aspartate. Glutamate 468 contributes to the ATP binding site. Arginine 475 serves as a coordination point for L-aspartate. 520 to 523 contributes to the ATP binding site; sequence GFDR.

This sequence belongs to the class-II aminoacyl-tRNA synthetase family. Type 1 subfamily. In terms of assembly, homodimer.

The protein resides in the cytoplasm. The catalysed reaction is tRNA(Asp) + L-aspartate + ATP = L-aspartyl-tRNA(Asp) + AMP + diphosphate. Its function is as follows. Catalyzes the attachment of L-aspartate to tRNA(Asp) in a two-step reaction: L-aspartate is first activated by ATP to form Asp-AMP and then transferred to the acceptor end of tRNA(Asp). In Thermosipho melanesiensis (strain DSM 12029 / CIP 104789 / BI429), this protein is Aspartate--tRNA ligase.